Consider the following 756-residue polypeptide: Ribosomal RNA large subunit methyltransferase K/L (756 aa).

The THUMP domain occupies Thr46–Leu157. The span at Glu395–Ala409 shows a compositional bias: basic and acidic residues. Residues Glu395–Glu441 are disordered.

This sequence belongs to the methyltransferase superfamily. RlmKL family.

The protein resides in the cytoplasm. The enzyme catalyses guanosine(2445) in 23S rRNA + S-adenosyl-L-methionine = N(2)-methylguanosine(2445) in 23S rRNA + S-adenosyl-L-homocysteine + H(+). It catalyses the reaction guanosine(2069) in 23S rRNA + S-adenosyl-L-methionine = N(2)-methylguanosine(2069) in 23S rRNA + S-adenosyl-L-homocysteine + H(+). Functionally, specifically methylates the guanine in position 2445 (m2G2445) and the guanine in position 2069 (m7G2069) of 23S rRNA. This chain is Ribosomal RNA large subunit methyltransferase K/L, found in Pseudomonas fluorescens (strain Pf0-1).